A 20-amino-acid chain; its full sequence is Citrate synthase (20 aa).

It belongs to the citrate synthase family. In terms of assembly, homodimer.

The catalysed reaction is oxaloacetate + acetyl-CoA + H2O = citrate + CoA + H(+). The protein operates within carbohydrate metabolism; tricarboxylic acid cycle; isocitrate from oxaloacetate: step 1/2. This Populus euphratica (Euphrates poplar) protein is Citrate synthase.